The primary structure comprises 211 residues: ATP phosphoribosyltransferase (211 aa).

The protein belongs to the ATP phosphoribosyltransferase family. Short subfamily. As to quaternary structure, heteromultimer composed of HisG and HisZ subunits.

It is found in the cytoplasm. The catalysed reaction is 1-(5-phospho-beta-D-ribosyl)-ATP + diphosphate = 5-phospho-alpha-D-ribose 1-diphosphate + ATP. It participates in amino-acid biosynthesis; L-histidine biosynthesis; L-histidine from 5-phospho-alpha-D-ribose 1-diphosphate: step 1/9. Its function is as follows. Catalyzes the condensation of ATP and 5-phosphoribose 1-diphosphate to form N'-(5'-phosphoribosyl)-ATP (PR-ATP). Has a crucial role in the pathway because the rate of histidine biosynthesis seems to be controlled primarily by regulation of HisG enzymatic activity. This Hahella chejuensis (strain KCTC 2396) protein is ATP phosphoribosyltransferase.